Reading from the N-terminus, the 405-residue chain is L-carnitine CoA-transferase (405 aa).

K97 and R104 together coordinate CoA. The active-site Nucleophile is the D169.

It belongs to the CoA-transferase III family. CaiB subfamily. As to quaternary structure, homodimer.

It is found in the cytoplasm. The catalysed reaction is crotonobetainyl-CoA + (R)-carnitine = crotonobetaine + (R)-carnitinyl-CoA. The enzyme catalyses 4-(trimethylamino)butanoyl-CoA + (R)-carnitine = (R)-carnitinyl-CoA + 4-(trimethylamino)butanoate. Its pathway is amine and polyamine metabolism; carnitine metabolism. Catalyzes the reversible transfer of the CoA moiety from gamma-butyrobetainyl-CoA to L-carnitine to generate L-carnitinyl-CoA and gamma-butyrobetaine. Is also able to catalyze the reversible transfer of the CoA moiety from gamma-butyrobetainyl-CoA or L-carnitinyl-CoA to crotonobetaine to generate crotonobetainyl-CoA. The chain is L-carnitine CoA-transferase from Salmonella enteritidis PT4 (strain P125109).